The sequence spans 325 residues: Putative HTH-type transcriptional regulatory protein MK1005 (325 aa).

The HTH cro/C1-type domain maps to Val128–Glu190. Residues Arg139–Val158 constitute a DNA-binding region (H-T-H motif).

This is Putative HTH-type transcriptional regulatory protein MK1005 from Methanopyrus kandleri (strain AV19 / DSM 6324 / JCM 9639 / NBRC 100938).